The sequence spans 157 residues: MASNRPQLSLKGRALKYLAAREHSRAELARKLAPHAGDPAEIEAVLDDLQARGFLSEARYVASVVHRRAERFGVARIRQELLSKGTPADQMTDALDALRTTELERARELWRRRFGQPPADAREAARQNRFLMSRGFSSDVVRQVLRLADHEHDHDNT.

Belongs to the RecX family.

It is found in the cytoplasm. Modulates RecA activity. This Leptothrix cholodnii (strain ATCC 51168 / LMG 8142 / SP-6) (Leptothrix discophora (strain SP-6)) protein is Regulatory protein RecX.